A 623-amino-acid chain; its full sequence is Kelch repeat and BTB domain-containing protein 2 (623 aa).

Residues Thr31–Asp98 enclose the BTB domain. The BACK domain maps to Cys133–Thr229. At Ser300 the chain carries Phosphoserine. Kelch repeat units follow at residues Asp317–Gly380, His381–Asp429, Ile431–Asp469, Lys470–Val529, and Cys535–Cys581.

Component of the BCR(KBTBD2) E3 ubiquitin ligase complex, at least composed of CUL3, KBTBD2 and RBX1. Interacts (via the BTB domain) with CUL3.

It participates in protein modification; protein ubiquitination. Its function is as follows. Substrate-specific adapter of a BCR (BTB-CUL3-RBX1) E3 ubiquitin ligase complex that acts as a regulator of the insulin signaling pathway, modulating insulin sensitivity by limiting PIK3R1/p85alpha abundance in adipocytes. Targets PIK3R1, the regulatory subunit of phosphatidylinositol 3-kinase (PI3K), for 'Lys-48'-linked polyubiquitination and proteasome-mediated degradation. The protein is Kelch repeat and BTB domain-containing protein 2 (KBTBD2) of Pongo abelii (Sumatran orangutan).